A 322-amino-acid chain; its full sequence is Acetyl-coenzyme A carboxylase carboxyl transferase subunit alpha 2 (322 aa).

The CoA carboxyltransferase C-terminal domain maps to 37–294 (EINRLSARSE…KRVLQESLRN (258 aa)).

The protein belongs to the AccA family. In terms of assembly, acetyl-CoA carboxylase is a heterohexamer composed of biotin carboxyl carrier protein (AccB), biotin carboxylase (AccC) and two subunits each of ACCase subunit alpha (AccA) and ACCase subunit beta (AccD).

Its subcellular location is the cytoplasm. The catalysed reaction is N(6)-carboxybiotinyl-L-lysyl-[protein] + acetyl-CoA = N(6)-biotinyl-L-lysyl-[protein] + malonyl-CoA. The protein operates within lipid metabolism; malonyl-CoA biosynthesis; malonyl-CoA from acetyl-CoA: step 1/1. Its function is as follows. Component of the acetyl coenzyme A carboxylase (ACC) complex. First, biotin carboxylase catalyzes the carboxylation of biotin on its carrier protein (BCCP) and then the CO(2) group is transferred by the carboxyltransferase to acetyl-CoA to form malonyl-CoA. Functionally, confers resistance to the endogenous polyketide antibiotic thailandamide. Can replace the endogenous gene in S.typhimurium, conferring slow growth and resistance to thailandamide. Can also replace the endogenous gene in E.coli, conferring resistance to thailandamide. This chain is Acetyl-coenzyme A carboxylase carboxyl transferase subunit alpha 2, found in Burkholderia thailandensis (strain ATCC 700388 / DSM 13276 / CCUG 48851 / CIP 106301 / E264).